A 171-amino-acid polypeptide reads, in one-letter code: Large ribosomal subunit protein uL10 (171 aa).

Belongs to the universal ribosomal protein uL10 family. Part of the ribosomal stalk of the 50S ribosomal subunit. The N-terminus interacts with L11 and the large rRNA to form the base of the stalk. The C-terminus forms an elongated spine to which L12 dimers bind in a sequential fashion forming a multimeric L10(L12)X complex.

Forms part of the ribosomal stalk, playing a central role in the interaction of the ribosome with GTP-bound translation factors. The chain is Large ribosomal subunit protein uL10 from Sphingopyxis alaskensis (strain DSM 13593 / LMG 18877 / RB2256) (Sphingomonas alaskensis).